Reading from the N-terminus, the 315-residue chain is Methionyl-tRNA formyltransferase (315 aa).

Position 113–116 (113–116) interacts with (6S)-5,6,7,8-tetrahydrofolate; it reads SLLP.

It belongs to the Fmt family.

The catalysed reaction is L-methionyl-tRNA(fMet) + (6R)-10-formyltetrahydrofolate = N-formyl-L-methionyl-tRNA(fMet) + (6S)-5,6,7,8-tetrahydrofolate + H(+). Attaches a formyl group to the free amino group of methionyl-tRNA(fMet). The formyl group appears to play a dual role in the initiator identity of N-formylmethionyl-tRNA by promoting its recognition by IF2 and preventing the misappropriation of this tRNA by the elongation apparatus. The chain is Methionyl-tRNA formyltransferase from Yersinia pseudotuberculosis serotype O:1b (strain IP 31758).